The primary structure comprises 1272 residues: MENTTILTVKDLVNEGIAVTGASSLFSSAASHSSSESTSTNPKSHPGAVDSDFSRKFLTPLNYPTVIFGTVALPSETLKCPNRYCFRFTDGDLTICCDILGFEFRAIGSKICVLSWNFLPMNHSGGFLEIINWKFVDSGSLLSRCSGISSFPLIPSLYSSQNGDRKSRYSVCGVLESISPVSVVPCMDGVSSDSVNLPGFLVHVMACECKVYSRDAIDCGHAFERSVFVYFCGLEAASWHPVVMKLVGRNVALSGLKRKLVYVRGDSLLVFVTTENSVLHPPWLSKKGTVSKTVVDRRGNCGSYRGYVRGLYLKGKLVEMDEDVWLLLTDQILNRSHSIRTGSLIFIRNVHFVNTKFPWGEVLILGACFKTSITVEFFSPFETSCLVDSCRQTSLSLYVESLSFPARLWTLLVRISFEKFNRMPSDKEILRSCQKDELTKMYAESRIPPSMFQPRGGIFTEFCMHESCGCNSEARDCNLKLVMPISSFVHHVKVMLNELLSQIKKDFSASDCLSHSSSTWKRYNNTNPKTLRSEDTGVILLGRLKISSSGRLQLHDRTSSIDVLTPDLLSDRNASRICEVPDYYLIIEGIPESMLHMPFLKNPFRCSSVLNPTPLAIKNTLTVPFSLSLGTASCKHLLKHHPFDWRHDFNEFKEGFFHLFRVTHKFPILKNGHPGMPDCTSVFIEALVLPWDLICTVTEEEAAAPNFEEHDTSQEIRPHKRCKTNNGLQSQSFLSVPHEISCQMTIRCASSHCLVATATLSNLTENKSGKMHSAMRVLLEFIPECSNYYGLQIGGCYLMKHGSDDSFCVGRSGISNNDKINFRPETRLWSLEFSFDEVLTHDGSMDVHPLVSSQPSFAVEQQNVSSRQPCSDVSLLLPYDAKGLFSVFLNDLEGLNKPLAAGKDNNNISCCTQSETIMHAEPSRLLPSNSLFPEGNLATFRGDVVAVDAVTSSVVDVSSSYCINVLVNHQMVKIFGPLRRHSYLTGFGFGTNATFYRILGTGEQNSFVLTSASFIKINSRKALDSPPLEKPTHGAALCLPKITPQEFVPCILAGPACNSFSGNEDNQQIKFACKVLSVYLLVLQTRSDDPSENECRNNIDIPLAGFVVDDGSSTYLCWTSGERAFTILRLHEELPEETIDVVQWTRRYSNWGTTAYHLDQIVRVHKRIVMKCNGSQIDVLFQDITIAVTSDQLLTKSEDKFLKWLILNAISGPIWEVAASSMDMKMIEHLEREQCVEMETSRYNLQSVWGNEVCQVDPLVRAWSLLQGLLNS.

Belongs to the CTC1 family. In terms of assembly, component of the CST complex, composed of CTC1, TEN1 and STN1. Interacts with POT1A.

The protein resides in the nucleus. Its subcellular location is the chromosome. The protein localises to the telomere. In terms of biological role, component of the CST complex, a complex that binds to single-stranded DNA and is required to protect telomeres from DNA degradation. The CST complex binds single-stranded DNA with high affinity in a sequence-independent manner, while isolated subunits bind DNA with low affinity by themselves. Associates with enzymatically active telomerase. The sequence is that of CST complex subunit CTC1 from Arabidopsis thaliana (Mouse-ear cress).